The following is a 312-amino-acid chain: R2-like ligand binding oxidase (312 aa).

The Mn(2+) site is built by E68, E101, and H104. The segment at residues 71–162 is a cross-link (3-(O4'-tyrosyl)-valine (Val-Tyr)); sequence VTQDIQPFMA…QAQVRASVTY (92 aa). Position 101 (E101) interacts with Fe cation. The Fe cation site is built by E167, E202, and H205.

Belongs to the ribonucleoside diphosphate reductase small chain family. R2-like ligand binding oxidase subfamily. As to quaternary structure, homodimer. Fe cation is required as a cofactor. It depends on Mn(2+) as a cofactor.

Probable oxidase that might be involved in lipid metabolism. The chain is R2-like ligand binding oxidase from Mycolicibacterium gilvum (strain PYR-GCK) (Mycobacterium gilvum (strain PYR-GCK)).